A 133-amino-acid chain; its full sequence is Small ribosomal subunit protein uS8 (133 aa).

Residues 1-28 (MANHDPISDMLTRIRNASEKRHEKTKVP) form a disordered region. A compositionally biased stretch (basic and acidic residues) spans 16-26 (NASEKRHEKTK).

Belongs to the universal ribosomal protein uS8 family. Part of the 30S ribosomal subunit. Contacts proteins S5 and S12.

One of the primary rRNA binding proteins, it binds directly to 16S rRNA central domain where it helps coordinate assembly of the platform of the 30S subunit. This is Small ribosomal subunit protein uS8 from Prochlorococcus marinus (strain NATL2A).